The chain runs to 555 residues: CTL-like protein DDB_G0274487 (555 aa).

The segment covering 1 to 17 (MGIEDNSQQPNTGSPYG) has biased composition (polar residues). Residues 1–101 (MGIEDNSQQP…NLNKANDRES (101 aa)) form a disordered region. Residues 19-63 (SPPSQYNPYGQQPPQQQQYNPYGEQQQQPQQQQQYGYQPQFQPTY) show a composition bias toward low complexity. Over residues 79–90 (PFPPQQQQPPPI) the composition is skewed to pro residues. N-linked (GlcNAc...) asparagine glycosylation is present at Asn-116. Residues 138-158 (IWFSILFGLNFGLLIVVSASA) form a helical membrane-spanning segment. Asn-174 is a glycosylation site (N-linked (GlcNAc...) asparagine). The next 10 helical transmembrane spans lie at 182-202 (FLFA…WAWL), 210-230 (ESLI…YCVF), 231-251 (FFVW…FFII), 284-304 (AGYV…SAFA), 313-333 (AIQT…FHVI), 340-360 (TVSG…VGMP), 372-392 (LTTS…IETL), 405-425 (VVVK…SSIV), 472-492 (IAIG…LISI), and 493-513 (PFDM…LVII).

It belongs to the CTL (choline transporter-like) family.

It localises to the membrane. In Dictyostelium discoideum (Social amoeba), this protein is CTL-like protein DDB_G0274487.